The primary structure comprises 675 residues: Protein PALS1 (675 aa).

2 disordered regions span residues 1 to 32 (MTTSYMNGHVTEESDSGIKNLGLASPEEHPKH) and 52 to 79 (RSAQLERIRQQQEDMRRRREEEGKKQEL). Residues 1 to 345 (MTTSYMNGHV…QQIKPPPAKE (345 aa)) are required for the correct localization of PALS1 and PATJ at cell-cell contacts and the normal formation of tight junctions and adherens junctions. 2 positions are modified to phosphoserine: Ser14 and Ser25. The interaction with PARD6B stretch occupies residues 21–140 (LGLASPEEHP…LKHIQHTLVD (120 aa)). A compositionally biased stretch (basic and acidic residues) spans 54–79 (AQLERIRQQQEDMRRRREEEGKKQEL). Phosphoserine is present on residues Ser83 and Ser84. L27 domains lie at 120-177 (KILE…NKAS) and 179-235 (PFPL…MQLE). Residues 181–243 (PLIANVQDLV…LEPITDERVY (63 aa)) are interaction with LIN7C. Residues 256 to 336 (IVRIEKARDI…TLTFVLIPSQ (81 aa)) form the PDZ domain. Residues 345–417 (ETVIHVKAHF…PGKSFQQQRE (73 aa)) form the SH3 domain. The 182-residue stretch at 479–660 (KRPIILIGPQ…AYQELLRLIN (182 aa)) folds into the Guanylate kinase-like domain. Position 486 to 493 (486 to 493 (GPQNCGQN)) interacts with ATP.

It belongs to the MAGUK family. As to quaternary structure, heterodimer with MPP1. Forms a heterotrimeric complex composed of PALS1, LIN7B and PATJ; the N-terminal L27 domain of PALS1 interacts with the L27 domain of PATJ and the C-terminal L27 domain of PALS1 interacts with the L27 domain of LIN7B. Component of a complex composed of PALS1, CRB1 and MPP4. Component of a complex whose core is composed of ARHGAP17, AMOT, PALS1, PATJ and PARD3/PAR3. Component of a complex composed of PALS1, CRB1 and EPB41L5. Within the complex, interacts (via HOOK domain) with EPB41L5 (via FERM domain), and interacts with CRB1 (via intracellular domain). Component of a complex composed of PALS1, MPP3 and CRB1; PALS1 acts as a bridging protein between MPP3 (via guanylate kinase-like domain) and CRB1. Component of a complex composed of CRB3, PALS1 and PATJ. As part of the Crumbs complex; interacts with WWP1, the interaction is enhanced by AMOTL2 and facilitates WWP1 localization to the plasma membrane. The Crumbs complex promotes monoubiquitination of AMOTL2 by WWP1, which activates the Hippo signaling pathway. Interacts (via PDZ domain) with PATJ (via N-terminus). Interacts with EZR. Interacts (via PDZ domain) with CRB1 (via C-terminal ERLI motif). While the PDZ domain is sufficient for interaction with CRB1, the adjacent SH3 and guanylate kinase-like domains are likely to contribute to a high affinity interaction. Interacts with WWTR1/TAZ (via WW domain). Interacts with MPP7. Interacts (via PDZ domain) with CRB3 (via C-terminus). Interacts with LIN7C. Interacts with MPDZ. Interacts with PARD6B. Interacts with SC6A1. Interacts with CDH5; the interaction promotes PALS1 localization to cell junctions and is required for CDH5-mediated vascular lumen formation and endothelial cell. Interacts with NPHP1 (via coiled coil and SH3 domains). Interacts with NPHP4. Interacts with CRB2.

It localises to the golgi apparatus. The protein resides in the cell membrane. Its subcellular location is the endomembrane system. It is found in the cell junction. The protein localises to the tight junction. It localises to the adherens junction. The protein resides in the cell projection. Its subcellular location is the axon. It is found in the perikaryon. The protein localises to the apical cell membrane. Plays a role in tight junction biogenesis and in the establishment of cell polarity in epithelial cells. Also involved in adherens junction biogenesis by ensuring correct localization of the exocyst complex protein EXOC4/SEC8 which allows trafficking of adherens junction structural component CDH1 to the cell surface. Plays a role through its interaction with CDH5 in vascular lumen formation and endothelial membrane polarity. Required during embryonic and postnatal retinal development. Required for the maintenance of cerebellar progenitor cells in an undifferentiated proliferative state, preventing premature differentiation, and is required for cerebellar histogenesis, fissure formation, cerebellar layer organization and cortical development. Plays a role in neuronal progenitor cell survival, potentially via promotion of mTOR signaling. Plays a role in the radial and longitudinal extension of the myelin sheath in Schwann cells. May modulate SC6A1/GAT1-mediated GABA uptake by stabilizing the transporter. May play a role in the T-cell receptor-mediated activation of NF-kappa-B. Required for localization of EZR to the apical membrane of parietal cells and may play a role in the dynamic remodeling of the apical cytoskeleton. Required for the normal polarized localization of the vesicular marker STX4. Required for the correct trafficking of the myelin proteins PMP22 and MAG. Involved in promoting phosphorylation and cytoplasmic retention of transcriptional coactivators YAP1 and WWTR1/TAZ which leads to suppression of TGFB1-dependent transcription of target genes such as CCN2/CTGF, SERPINE1/PAI1, SNAI1/SNAIL1 and SMAD7. This Rattus norvegicus (Rat) protein is Protein PALS1.